The chain runs to 252 residues: dITP/XTP pyrophosphatase (252 aa).

Substrate is bound at residue 7–12 (THNEGK). Aspartate 74 serves as the catalytic Proton acceptor. Aspartate 74 is a binding site for Mg(2+). Substrate is bound by residues serine 75 and 193–196 (FGYD). The interval 202 to 229 (DDQPAGRVSTEPDHEGEPLTSAEMTPAE) is disordered. Substrate-binding positions include lysine 230 and 235 to 236 (HR).

It belongs to the HAM1 NTPase family. As to quaternary structure, homodimer. Mg(2+) is required as a cofactor.

It carries out the reaction XTP + H2O = XMP + diphosphate + H(+). The catalysed reaction is dITP + H2O = dIMP + diphosphate + H(+). The enzyme catalyses ITP + H2O = IMP + diphosphate + H(+). Pyrophosphatase that catalyzes the hydrolysis of nucleoside triphosphates to their monophosphate derivatives, with a high preference for the non-canonical purine nucleotides XTP (xanthosine triphosphate), dITP (deoxyinosine triphosphate) and ITP. Seems to function as a house-cleaning enzyme that removes non-canonical purine nucleotides from the nucleotide pool, thus preventing their incorporation into DNA/RNA and avoiding chromosomal lesions. The polypeptide is dITP/XTP pyrophosphatase (Bifidobacterium longum (strain DJO10A)).